Reading from the N-terminus, the 562-residue chain is Probable malate:quinone oxidoreductase (562 aa).

The tract at residues 530 to 562 (EVPDKSATPPDPTIAPKHQHSPTHNANSEMQAL) is disordered. The span at 551-562 (PTHNANSEMQAL) shows a compositional bias: polar residues.

This sequence belongs to the MQO family. Requires FAD as cofactor.

It catalyses the reaction (S)-malate + a quinone = a quinol + oxaloacetate. It functions in the pathway carbohydrate metabolism; tricarboxylic acid cycle; oxaloacetate from (S)-malate (quinone route): step 1/1. This chain is Probable malate:quinone oxidoreductase, found in Xylella fastidiosa (strain 9a5c).